We begin with the raw amino-acid sequence, 154 residues long: UPF0178 protein Gbem_2221 (154 aa).

Belongs to the UPF0178 family.

The chain is UPF0178 protein Gbem_2221 from Citrifermentans bemidjiense (strain ATCC BAA-1014 / DSM 16622 / JCM 12645 / Bem) (Geobacter bemidjiensis).